The following is a 306-amino-acid chain: Oligopeptide transport system permease protein OppB (306 aa).

Over 1 to 11 (MLKFILRRCLE) the chain is Cytoplasmic. The chain crosses the membrane as a helical span at residues 12 to 32 (AIPTLFILITISFFMMRLAPG). Topologically, residues 33-99 (SPFTGERTLP…VASSFPVSAK (67 aa)) are periplasmic. The ABC transmembrane type-1 domain occupies 94-293 (FPVSAKLGAA…ALTILFNAIV (200 aa)). Residues 100–120 (LGAAAFFLAVILGVSAGVIAA) form a helical membrane-spanning segment. Over 121 to 137 (LKQNTKWDYTVMGLAMT) the chain is Cytoplasmic. The helical transmembrane segment at 138–158 (GVVIPSFVVAPLLVMIFAIIL) threads the bilayer. The Periplasmic segment spans residues 159-169 (HWLPGGGWNGG). Residues 170–190 (ALKFMILPMVALSLAYIASIA) traverse the membrane as a helical segment. Residues 191 to 229 (RITRGSMIEVLHSNFIRTARAKGLPMRRIILRHALKPAL) lie on the Cytoplasmic side of the membrane. A helical transmembrane segment spans residues 230 to 250 (LPVLSYMGPAFVGIITGSMVI). The Periplasmic portion of the chain corresponds to 251 to 279 (ETIYGLPGIGQLFVNGALNRDYSLVLSLT). The helical transmembrane segment at 280–300 (ILVGALTILFNAIVDVLYAVI) threads the bilayer. Residues 301 to 306 (DPKIRY) are Cytoplasmic-facing.

This sequence belongs to the binding-protein-dependent transport system permease family. OppBC subfamily. As to quaternary structure, the complex is composed of two ATP-binding proteins (OppD and OppF), two transmembrane proteins (OppB and OppC) and a solute-binding protein (OppA).

The protein localises to the cell inner membrane. In terms of biological role, part of the ABC transporter complex OppABCDF involved in the uptake of oligopeptides. Probably responsible for the translocation of the substrate across the membrane. The protein is Oligopeptide transport system permease protein OppB (oppB) of Shigella flexneri.